Consider the following 556-residue polypeptide: Oxygen-dependent choline dehydrogenase (556 aa).

Residue 4 to 33 (DYIIIGAGSAGNVLATRLTEDPNTTVLLLE) participates in FAD binding. Catalysis depends on His-473, which acts as the Proton acceptor.

Belongs to the GMC oxidoreductase family. The cofactor is FAD.

Its subcellular location is the cell membrane. The enzyme catalyses choline + A = betaine aldehyde + AH2. It catalyses the reaction betaine aldehyde + NAD(+) + H2O = glycine betaine + NADH + 2 H(+). The protein operates within amine and polyamine biosynthesis; betaine biosynthesis via choline pathway; betaine aldehyde from choline (cytochrome c reductase route): step 1/1. Its function is as follows. Involved in the biosynthesis of the osmoprotectant glycine betaine. Catalyzes the oxidation of choline to betaine aldehyde and betaine aldehyde to glycine betaine at the same rate. The polypeptide is Oxygen-dependent choline dehydrogenase (Escherichia coli O6:H1 (strain CFT073 / ATCC 700928 / UPEC)).